The following is a 467-amino-acid chain: Neurexin-1-beta (467 aa).

The first 45 residues, 1-45 (MYQRMLRCGAELGSPGGGGGGAGGRLALLWIVPLTLSGLLGVAWG), serve as a signal peptide directing secretion. The Extracellular portion of the chain corresponds to 46-391 (ASSLGAHHIH…EVIRESSSTT (346 aa)). In terms of domain architecture, Laminin G-like spans 86–284 (YIFSKGGGQI…DANIAIVGNV (199 aa)). Asp136 and Val153 together coordinate Ca(2+). Asn183 carries an N-linked (GlcNAc...) asparagine glycan. Residues 200–229 (GNNDNERLAIARQRIPYRLGRVVDEWLLDK) are essential for interaction with CBLN1; modulates interaction affinity with NLGN1, NLGN2 and NLGN3; prevents interaction with DAG1/alpha-dystroglycan; modulates interaction with alpha-latrotoxin. The Ca(2+) site is built by Ile235 and Asn237. The interval 318-380 (LATSTARRGN…AGGREPYPGS (63 aa)) is disordered. Over residues 324-339 (RRGNSPTKEPVSQTTD) the composition is skewed to polar residues. O-linked (Xyl...) (heparan sulfate) serine glycosylation is present at Ser345. Residues 392–412 (GMVVGIVAAAALCILILLYAM) form a helical membrane-spanning segment. The Cytoplasmic segment spans residues 413–467 (YKYRNRDEGSYHVDESRNYISNSAQSNGAVVKEKQPSSAKSANKNKKNKDKEYYV). Residues 434–467 (NSAQSNGAVVKEKQPSSAKSANKNKKNKDKEYYV) form a disordered region. A phosphoserine mark is found at Ser449, Ser450, and Ser453.

This sequence belongs to the neurexin family. The cytoplasmic C-terminal region binds to CASK. Binds NLGN1, NLGN2 and NLGN3, DAG1 (alpha-dystroglycan) and alpha-latrotoxin. Binding to neuroligins is calcium-dependent, and the binding preference ranks as follow: NLGN1 &gt; NLGN4 &gt;&gt; NLGN3 &gt; NLGN2. Interacts with CBLN2 and more weakly with CBLN4. Interacts with CBLN1; interaction is CBLN1 hexamer form-dependent; CBLN1-binding is calcium-independent; isoform 1b does not interact with CBLN1. Interacts with CLSTN3. Post-translationally, O-glycosylated; contains heparan sulfate. Heparan sulfate attachment is required for synapse development by mediating interactions with neuroligins.

The protein localises to the presynaptic cell membrane. Functionally, neuronal cell surface protein involved in cell recognition and cell adhesion by forming intracellular junctions through binding to neuroligins. Plays a role in formation of synaptic junctions. Functions as part of a trans-synaptic complex by binding to cerebellins and postsynaptic GRID1. This interaction helps regulate the activity of NMDA and AMPA receptors at hippocampal synapses without affecting synapse formation. NRXN1B-CBLN2-GRID1 complex transduce presynaptic signals into postsynaptic NMDAR response. This chain is Neurexin-1-beta, found in Bos taurus (Bovine).